A 488-amino-acid chain; its full sequence is 3-octaprenyl-4-hydroxybenzoate carboxy-lyase (488 aa).

Asparagine 172 contacts Mn(2+). Prenylated FMN is bound by residues 175-177 (IYR), 189-191 (RWL), and 194-195 (RG). Glutamate 238 serves as a coordination point for Mn(2+). The Proton donor role is filled by aspartate 287.

It belongs to the UbiD family. Homohexamer. It depends on prenylated FMN as a cofactor. The cofactor is Mn(2+).

The protein resides in the cell membrane. The catalysed reaction is a 4-hydroxy-3-(all-trans-polyprenyl)benzoate + H(+) = a 2-(all-trans-polyprenyl)phenol + CO2. It participates in cofactor biosynthesis; ubiquinone biosynthesis. Its function is as follows. Catalyzes the decarboxylation of 3-octaprenyl-4-hydroxy benzoate to 2-octaprenylphenol, an intermediate step in ubiquinone biosynthesis. In Legionella pneumophila (strain Paris), this protein is 3-octaprenyl-4-hydroxybenzoate carboxy-lyase.